Consider the following 216-residue polypeptide: Uracil phosphoribosyltransferase (216 aa).

5-phospho-alpha-D-ribose 1-diphosphate-binding positions include Arg85, Arg110, and 135-143; that span reads DPMVATGYS. Residues Ile200 and 205–207 each bind uracil; that span reads GDA. Position 206 (Asp206) interacts with 5-phospho-alpha-D-ribose 1-diphosphate.

The protein belongs to the UPRTase family. The cofactor is Mg(2+).

The catalysed reaction is UMP + diphosphate = 5-phospho-alpha-D-ribose 1-diphosphate + uracil. Its pathway is pyrimidine metabolism; UMP biosynthesis via salvage pathway; UMP from uracil: step 1/1. Its activity is regulated as follows. Allosterically activated by GTP. Catalyzes the conversion of uracil and 5-phospho-alpha-D-ribose 1-diphosphate (PRPP) to UMP and diphosphate. The polypeptide is Uracil phosphoribosyltransferase (Paraburkholderia phymatum (strain DSM 17167 / CIP 108236 / LMG 21445 / STM815) (Burkholderia phymatum)).